The chain runs to 872 residues: Alanine--tRNA ligase (872 aa).

Zn(2+) is bound by residues histidine 563, histidine 567, cysteine 665, and histidine 669.

It belongs to the class-II aminoacyl-tRNA synthetase family. Requires Zn(2+) as cofactor.

It is found in the cytoplasm. It catalyses the reaction tRNA(Ala) + L-alanine + ATP = L-alanyl-tRNA(Ala) + AMP + diphosphate. Its function is as follows. Catalyzes the attachment of alanine to tRNA(Ala) in a two-step reaction: alanine is first activated by ATP to form Ala-AMP and then transferred to the acceptor end of tRNA(Ala). Also edits incorrectly charged Ser-tRNA(Ala) and Gly-tRNA(Ala) via its editing domain. The sequence is that of Alanine--tRNA ligase from Bacteroides fragilis (strain ATCC 25285 / DSM 2151 / CCUG 4856 / JCM 11019 / LMG 10263 / NCTC 9343 / Onslow / VPI 2553 / EN-2).